Reading from the N-terminus, the 272-residue chain is Cell division protein DivIB (272 aa).

Residues 1–21 are Cytoplasmic-facing; that stretch reads MRLSSHGKKTVSTSNNPVFNR. Residues 22 to 42 traverse the membrane as a helical segment; sequence IGLFFTAAILFALFLQMLFFL. The POTRA domain maps to 43 to 115; that stretch reads RPWQDIKETK…GTAIIRVNEN (73 aa). The Extracellular portion of the chain corresponds to 43-272; it reads RPWQDIKETK…SSSKSSNSSK (230 aa). Residues 253–272 form a disordered region; that stretch reads LSSLSSDKSKSSSKSSNSSK.

It belongs to the FtsQ/DivIB family. DivIB subfamily.

The protein resides in the cell membrane. Its function is as follows. Cell division protein that may be involved in stabilizing or promoting the assembly of the division complex. The protein is Cell division protein DivIB of Oenococcus oeni (strain ATCC BAA-331 / PSU-1).